Reading from the N-terminus, the 391-residue chain is uncharacterized protein (391 aa).

In terms of domain architecture, OBG-type G spans 85–314 (ATAAFVGFPS…LKEKIYEKLG (230 aa)). GTP-binding positions include 91–98 (GFPSVGKS), 137–141 (DAPGI), and 267–270 (NKID). The region spanning 314-389 (GFIKIYLKPQ…EDGDILTIVI (76 aa)) is the TGS domain.

It belongs to the TRAFAC class OBG-HflX-like GTPase superfamily. OBG GTPase family.

This is an uncharacterized protein from Methanocaldococcus jannaschii (strain ATCC 43067 / DSM 2661 / JAL-1 / JCM 10045 / NBRC 100440) (Methanococcus jannaschii).